We begin with the raw amino-acid sequence, 591 residues long: Ketol-acid reductoisomerase, chloroplastic (591 aa).

The segment at 1 to 20 is disordered; the sequence is MAAATSSIAPSLSCPSPSSS. The N-terminal 52 residues, 1–52, are a transit peptide targeting the chloroplast; the sequence is MAAATSSIAPSLSCPSPSSSSKTLWSSKARTLALPNIGFLSSSSKSLRSLTA. Residue Thr-53 is modified to N-acetylthreonine. A KARI N-terminal Rossmann domain is found at 102–300; sequence VRGGRDLFKH…ALGSPFTFAT (199 aa). Residues 123–130, 156–161, and 195–199 each bind NADP(+); these read GVIGWGSQ, RKGSRS, and SDAAQ. His-220 is an active-site residue. KARI C-terminal knotted domains are found at residues 301–449 and 450–586; these read TLEQ…RPAG and DLGP…RPEL. The Mg(2+) site is built by Asp-309, Glu-313, Glu-486, and Glu-490. Ser-512 contributes to the substrate binding site.

Belongs to the ketol-acid reductoisomerase family. Homodimer. Mg(2+) serves as cofactor.

It localises to the plastid. The protein resides in the chloroplast. The enzyme catalyses (2R)-2,3-dihydroxy-3-methylbutanoate + NADP(+) = (2S)-2-acetolactate + NADPH + H(+). The catalysed reaction is (2R,3R)-2,3-dihydroxy-3-methylpentanoate + NADP(+) = (S)-2-ethyl-2-hydroxy-3-oxobutanoate + NADPH + H(+). It participates in amino-acid biosynthesis; L-isoleucine biosynthesis; L-isoleucine from 2-oxobutanoate: step 2/4. Its pathway is amino-acid biosynthesis; L-valine biosynthesis; L-valine from pyruvate: step 2/4. The polypeptide is Ketol-acid reductoisomerase, chloroplastic (Arabidopsis thaliana (Mouse-ear cress)).